A 34-amino-acid polypeptide reads, in one-letter code: Tryptophanase operon leader peptide (34 aa).

In Proteus vulgaris, this protein is Tryptophanase operon leader peptide (tnaL).